The chain runs to 388 residues: Zinc finger protein 1 (388 aa).

Polar residues predominate over residues 1 to 19 (MSSIPNINWNDPNNGKSNT). 3 disordered regions span residues 1 to 120 (MSSI…QQPL), 157 to 219 (LQQR…QQWD), and 236 to 311 (SSIQ…KPIT). Positions 20 to 38 (SRQSQPQPQLPSNVSPPNS) are enriched in low complexity. Polar residues-rich tracts occupy residues 52–67 (YGSS…NPNT) and 88–97 (YPVQQTAQQR). Low complexity-rich tracts occupy residues 102–120 (LQQV…QQPL) and 157–172 (LQQR…KSQL). Polar residues predominate over residues 173 to 203 (NEQNAMMSASTQQYPVQDFTNPYPNAQNPAE). Low complexity-rich tracts occupy residues 204-217 (QQQQ…QSQQ) and 236-259 (SSIQ…KQQQ). Positions 268-278 (KKKPGRKPKLR) are enriched in basic residues. Over residues 282–294 (ESSSETPQVPKTA) the composition is skewed to polar residues. The segment at residues 318-345 (CLTCRQRKKRCCETRPRCTECTRLRLNC) is a DNA-binding region (zn(2)-C6 fungal-type). Residues 348–367 (PKPGTEHKNKPKDQKDDENT) form a disordered region. Basic and acidic residues predominate over residues 351–367 (GTEHKNKPKDQKDDENT).

Its subcellular location is the nucleus. Functionally, perhaps a regulatory role. May be involved in transcriptional activation. The chain is Zinc finger protein 1 (CZF1) from Candida albicans (strain WO-1) (Yeast).